Reading from the N-terminus, the 218-residue chain is Ras-related protein Rab-11B (218 aa).

The residue at position 2 (glycine 2) is an N-acetylglycine. GTP contacts are provided by serine 20, glycine 21, glycine 23, lysine 24, serine 25, asparagine 26, asparagine 37, leucine 38, serine 40, serine 42, and threonine 43. Residue serine 25 participates in Mg(2+) binding. The Switch 1 motif lies at 36–47; sequence FNLESKSTIGVE. Positions 43 and 66 each coordinate Mg(2+). The Switch 2 motif lies at 67–86; that stretch reads TAGQERYRAITSAYYRGAVG. The GTP site is built by glycine 69, asparagine 124, lysine 125, aspartate 127, alanine 155, and leucine 156. The tract at residues 183-218 is disordered; it reads DRSAHDESPGNNVVDISVPPTTDGQKSNKLQCCQNM. A compositionally biased stretch (polar residues) spans 201–218; sequence PPTTDGQKSNKLQCCQNM. Residues cysteine 214 and cysteine 215 are each lipidated (S-geranylgeranyl cysteine). Cysteine 215 is modified (cysteine methyl ester). The propeptide at 216-218 is removed in mature form; that stretch reads QNM.

It belongs to the small GTPase superfamily. Rab family. Requires Mg(2+) as cofactor.

Its subcellular location is the recycling endosome membrane. The protein localises to the cytoplasmic vesicle. The protein resides in the secretory vesicle. It localises to the synaptic vesicle membrane. It is found in the phagosome membrane. The catalysed reaction is GTP + H2O = GDP + phosphate + H(+). Its activity is regulated as follows. Regulated by guanine nucleotide exchange factors (GEFs) which promote the exchange of bound GDP for free GTP. Regulated by GTPase activating proteins (GAPs) which increase the GTP hydrolysis activity. Inhibited by GDP dissociation inhibitors (GDIs) which prevent Rab-GDP dissociation. In terms of biological role, the small GTPases Rab are key regulators of intracellular membrane trafficking, from the formation of transport vesicles to their fusion with membranes. Rabs cycle between an inactive GDP-bound form and an active GTP-bound form that is able to recruit to membranes different set of downstream effectors directly responsible for vesicle formation, movement, tethering and fusion. That Rab plays a role in endocytic recycling, regulating apical recycling of several transmembrane proteins including cystic fibrosis transmembrane conductance regulator/CFTR, epithelial sodium channel/ENaC, potassium voltage-gated channel, and voltage-dependent L-type calcium channel. May also regulate constitutive and regulated secretion, like insulin granule exocytosis. Required for melanosome transport and release from melanocytes. Also regulates V-ATPase intracellular transport in response to extracellular acidosis. The polypeptide is Ras-related protein Rab-11B (Diplobatis ommata (Ocellated electric ray)).